Consider the following 145-residue polypeptide: 3-dehydroquinate dehydratase (145 aa).

Y24 acts as the Proton acceptor in catalysis. Positions 76, 82, and 89 each coordinate substrate. Residue H102 is the Proton donor of the active site. Substrate-binding positions include 103–104 (VS) and R113.

It belongs to the type-II 3-dehydroquinase family. Homododecamer.

It carries out the reaction 3-dehydroquinate = 3-dehydroshikimate + H2O. The protein operates within metabolic intermediate biosynthesis; chorismate biosynthesis; chorismate from D-erythrose 4-phosphate and phosphoenolpyruvate: step 3/7. Its function is as follows. Catalyzes a trans-dehydration via an enolate intermediate. This chain is 3-dehydroquinate dehydratase, found in Herminiimonas arsenicoxydans.